We begin with the raw amino-acid sequence, 130 residues long: Small ribosomal subunit protein uS11c (130 aa).

It belongs to the universal ribosomal protein uS11 family. Part of the 30S ribosomal subunit.

Its subcellular location is the plastid. It localises to the chloroplast. The chain is Small ribosomal subunit protein uS11c from Marsilea quadrifolia (European water clover).